A 353-amino-acid polypeptide reads, in one-letter code: C-X-C chemokine receptor type 4 (353 aa).

The important for chemokine binding and signaling stretch occupies residues 1-22 (MEGIRIFTSDNYTEDDLGSGDY). The Extracellular portion of the chain corresponds to 1–39 (MEGIRIFTSDNYTEDDLGSGDYDSMKEPCFREENAHFNR). N-linked (GlcNAc...) asparagine glycosylation occurs at N11. At Y12 the chain carries Sulfotyrosine. An O-linked (Xyl...) (chondroitin sulfate) serine glycan is attached at S19. Position 22 is a sulfotyrosine (Y22). Cystine bridges form between C29/C275 and C110/C187. Residues 40-64 (IFLPTVYSIIFLTGIVGNGLVILVM) traverse the membrane as a helical segment. At 65–78 (GYQKKLRSMTDKYR) the chain is on the cytoplasmic side. The helical transmembrane segment at 79–100 (LHLSVADLLFVLTLPFWAVDAV) threads the bilayer. A chemokine binding region spans residues 95–98 (WAVD). The Extracellular portion of the chain corresponds to 101–111 (ANWYFGKFLCK). Residues 112-131 (AVHVIYTVNLYSSVLILAFI) form a helical membrane-spanning segment. The chemokine binding stretch occupies residues 114–118 (HVIYT). Topologically, residues 132 to 155 (SLDRYLAIVHATNSQKPRKLLAEK) are cytoplasmic. An Important for signaling motif is present at residues 134-136 (DRY). An involved in dimerization; when bound to chemokine region spans residues 136-148 (YLAIVHATNSQKP). A helical membrane pass occupies residues 156–175 (VVYVGVWLPAVLLTIPDLIF). At 176–196 (ADIKEVDERYICDRFYPSDLW) the chain is on the extracellular side. The tract at residues 187 to 191 (CDRFY) is chemokine binding, important for signaling. Residues 192–211 (PSDLWLVVFQFQHIVVGLLL) form an involved in dimerization region. Residues 197–217 (LVVFQFQHIVVGLLLPGIVIL) traverse the membrane as a helical segment. The Cytoplasmic segment spans residues 218–242 (SCYCIIISKLSHSKGYQKRKALKTT). Residues 243–262 (VILILTFFACWLPYYIGISI) traverse the membrane as a helical segment. Residues 263-283 (DSFILLEIIQQGCEFESTVHK) lie on the Extracellular side of the membrane. The interval 267–269 (LLE) is involved in dimerization. Residues 284-303 (WISITEALAFFHCCLNPILY) traverse the membrane as a helical segment. Residues 304-353 (AFLGAKFKTSAQHALTSVSRGSSLKILSKGKRGGHSSVSTESESSSFHSS) lie on the Cytoplasmic side of the membrane. Phosphoserine occurs at positions 320 and 322. S325 and S326 each carry phosphoserine; by PKC and GRK6. The tract at residues 330–353 (LSKGKRGGHSSVSTESESSSFHSS) is disordered. The residue at position 331 (S331) is a Phosphoserine; by GRK6. K332 is covalently cross-linked (Glycyl lysine isopeptide (Lys-Gly) (interchain with G-Cter in ubiquitin)). The segment covering 338–353 (HSSVSTESESSSFHSS) has biased composition (low complexity). S340 is modified (phosphoserine; by GRK6). A phosphoserine mark is found at S349 and S352.

It belongs to the G-protein coupled receptor 1 family. As to quaternary structure, monomer. Can form homodimers. Interacts with CD164. Interacts with ARRB2; the interaction is dependent on the C-terminal phosphorylation of CXCR4 and allows activation of MAPK1 and MAPK3. Interacts with ARR3; the interaction is dependent on the C-terminal phosphorylation of CXCR4 and modulates calcium mobilization. Interacts with RNF113A; the interaction, enhanced by CXCL12, promotes CXCR4 ubiquitination and subsequent degradation. Interacts (via the cytoplasmic C-terminal) with ITCH (via the WW domains I and II); the interaction, enhanced by CXCL12, promotes CXCR4 ubiquitination and leads to its degradation. Interacts with extracellular ubiquitin. Interacts with DBN1; this interaction is enhanced by antigenic stimulation. Following LPS binding, may form a complex with GDF5, HSP90AA1 and HSPA8. Post-translationally, phosphorylated on agonist stimulation. Rapidly phosphorylated on serine and threonine residues in the C-terminal. Phosphorylation at Ser-325 and Ser-326 leads to recruitment of ITCH, ubiquitination and protein degradation. In terms of processing, ubiquitinated after ligand binding, leading to its degradation. Ubiquitinated by ITCH at the cell membrane on agonist stimulation. The ubiquitin-dependent mechanism, endosomal sorting complex required for transport (ESCRT), then targets CXCR4 for lysosomal degradation. This process is dependent also on prior Ser-/Thr-phosphorylation in the C-terminal of CXCR4. Also binding of ARRB1 to STAM negatively regulates CXCR4 sorting to lysosomes though modulating ubiquitination of SFR5S. Sulfation is required for efficient binding of CXCL12/SDF-1alpha and promotes its dimerization. Post-translationally, O- and N-glycosylated. N-glycosylation can mask coreceptor function. The O-glycosylation chondroitin sulfate attachment does not affect interaction with CXCL12/SDF-1alpha nor its coreceptor activity. As to expression, brain, heart, kidney, lung and liver.

The protein localises to the cell membrane. Its subcellular location is the cell junction. The protein resides in the early endosome. It is found in the late endosome. It localises to the lysosome. Receptor for the C-X-C chemokine CXCL12/SDF-1 that transduces a signal by increasing intracellular calcium ion levels and enhancing MAPK1/MAPK3 activation. Involved in the AKT signaling cascade. Plays a role in regulation of cell migration, e.g. during wound healing. Acts as a receptor for extracellular ubiquitin; leading to enhanced intracellular calcium ions and reduced cellular cAMP levels. Binds bacterial lipopolysaccharide (LPS) et mediates LPS-induced inflammatory response, including TNF secretion by monocytes. Involved in hematopoiesis and in cardiac ventricular septum formation. Also plays an essential role in vascularization of the gastrointestinal tract, probably by regulating vascular branching and/or remodeling processes in endothelial cells. Involved in cerebellar development. In the CNS, could mediate hippocampal-neuron survival. In Bos taurus (Bovine), this protein is C-X-C chemokine receptor type 4 (CXCR4).